Consider the following 75-residue polypeptide: Small ribosomal subunit protein bS18 (75 aa).

This sequence belongs to the bacterial ribosomal protein bS18 family. In terms of assembly, part of the 30S ribosomal subunit. Forms a tight heterodimer with protein bS6.

In terms of biological role, binds as a heterodimer with protein bS6 to the central domain of the 16S rRNA, where it helps stabilize the platform of the 30S subunit. This Thermotoga maritima (strain ATCC 43589 / DSM 3109 / JCM 10099 / NBRC 100826 / MSB8) protein is Small ribosomal subunit protein bS18.